A 505-amino-acid chain; its full sequence is Calcium/calmodulin-dependent protein kinase kinase 1 (505 aa).

The disordered stretch occupies residues L28–P66. A phosphoserine mark is found at S67 and S74. R78 carries the asymmetric dimethylarginine modification. The interval L84 to R105 is disordered. S100 carries the post-translational modification Phosphoserine. At T108 the chain carries Phosphothreonine. Residues Y128–V409 enclose the Protein kinase domain. ATP contacts are provided by residues I134–V142 and K157. The tract at residues Q167–Q189 is RP domain. The active-site Proton acceptor is D275. Residues K435 to L440 form an autoinhibitory domain region. The segment at V438–F463 is calmodulin-binding. A phosphoserine mark is found at S458, S475, and S492. The interval G460 to S505 is disordered.

Belongs to the protein kinase superfamily. Ser/Thr protein kinase family. In terms of assembly, interacts with CAMK4 and calmodulin. In terms of processing, appears to be autophosphorylated in a Ca(2+)/calmodulin-dependent manner. Phosphorylated at multiple sites by PRCAKA/PKA. Phosphorylation of Ser-458 is blocked upon binding to Ca(2+)/calmodulin. In vitro, phosphorylated by CAMK1 and CAMK4. Widely expressed. Differentially expressed in various brain regions.

It localises to the cytoplasm. The protein resides in the nucleus. It catalyses the reaction L-seryl-[protein] + ATP = O-phospho-L-seryl-[protein] + ADP + H(+). The enzyme catalyses L-threonyl-[protein] + ATP = O-phospho-L-threonyl-[protein] + ADP + H(+). Activated by Ca(2+)/calmodulin. Binding of calmodulin may relieve intrasteric autoinhibition. Partially inhibited upon phosphorylation by PRCAKA/PKA. May be regulated through phosphorylation by CAMK1 and CAMK4. Its function is as follows. Calcium/calmodulin-dependent protein kinase that belongs to a proposed calcium-triggered signaling cascade involved in a number of cellular processes. Phosphorylates CAMK1, CAMK1D, CAMK1G and CAMK4. Involved in regulating cell apoptosis. Promotes cell survival by phosphorylating AKT1/PKB that inhibits pro-apoptotic BAD/Bcl2-antagonist of cell death. The polypeptide is Calcium/calmodulin-dependent protein kinase kinase 1 (Camkk1) (Mus musculus (Mouse)).